Reading from the N-terminus, the 386-residue chain is MKALYFDCFSGISGDMILGALIDLGIDVEKWKTELNKIPVKGYKIEISKKQKNSIWGTDVNIIIDDHHSHRHLEDLLKIVDESGLSENIKTKAKNIFYKIAEAEAKIHNQPIDEVHFHEIGALDTIIDVLGSLILLEMLEVEEIYSSPLPLGSGFVNTAHGTIPVPAPATLEILRGIPVYKDGREGELVTPTGAAIISTVANFVQELPPIRVDKIGYGCGKKDFSFPNLLRVYVGELVESTVKERNIVLETNIDDMNPQIFGYLVEKLFKEGALDVFLTPVYMKKGRPGILLSVIAPLVMEERLSEVIFRETTTLGIRKIYVDKKIMPREIKEIETKWGKVRIKVANINGIRKAYPEYEDCKSIAERENIPLKDVILEIEKLMERE.

It belongs to the LarC family.

This chain is Putative nickel insertion protein, found in Dictyoglomus thermophilum (strain ATCC 35947 / DSM 3960 / H-6-12).